A 540-amino-acid polypeptide reads, in one-letter code: Peptide chain release factor 3 (540 aa).

Residues 14 to 283 (NQRRNFAIIS…AFLDYALKPI (270 aa)) enclose the tr-type G domain. GTP is bound by residues 23 to 30 (SHPDAGKT), 91 to 95 (DTPGH), and 145 to 148 (NKLD).

This sequence belongs to the TRAFAC class translation factor GTPase superfamily. Classic translation factor GTPase family. PrfC subfamily.

The protein resides in the cytoplasm. Its function is as follows. Increases the formation of ribosomal termination complexes and stimulates activities of RF-1 and RF-2. It binds guanine nucleotides and has strong preference for UGA stop codons. It may interact directly with the ribosome. The stimulation of RF-1 and RF-2 is significantly reduced by GTP and GDP, but not by GMP. In Gloeothece citriformis (strain PCC 7424) (Cyanothece sp. (strain PCC 7424)), this protein is Peptide chain release factor 3.